Here is a 547-residue protein sequence, read N- to C-terminus: CAP-Gly domain-containing linker protein 3 (547 aa).

Positions 1–49 (MTKTDPAPMAPPPRGEEEEEEEEDEPVPEAPSPTQERRQKPVVHPSAPA) are disordered. The segment covering 16 to 27 (EEEEEEEEDEPV) has biased composition (acidic residues). ANK repeat units follow at residues 117-158 (TDMT…LRSR), 160-191 (TNMN…VVNS), and 197-229 (NHGS…LRNR). Residues 314–356 (GTTEFASGQWVGVELDEPEGKNDGSVGGVRYFICPPKQGLFAS) form the CAP-Gly 1 domain. The tract at residues 365–413 (DAPPSSVTSTPRTPRMDFSRVTGKGRREHKGKKKSPSSPSLGSLQQREG) is disordered. A compositionally biased stretch (low complexity) spans 367–377 (PPSSVTSTPRT). At threonine 374 the chain carries Phosphothreonine. Positions 387 to 399 (GKGRREHKGKKKS) are enriched in basic residues. A phosphoserine mark is found at serine 399 and serine 401. One can recognise a CAP-Gly 2 domain in the interval 436–478 (GKTDFAPGYWYGIELDQPTGKHDGSVFGVRYFTCAPRHGVFAP). The segment at 488 to 547 (STDPPGDSVGAKKVHQVTMTQPKRTFTTVRTPKDIASENSISRLLFCCWFPWMLRAEMQS) is goLD. 2 S-palmitoyl cysteine lipidation sites follow: cysteine 534 and cysteine 535.

Homodimer. Interacts with AKT1 and AKT2; when AKT1 and AKT2 are phosphorylated and activated, affinity is higher for AKT2. Interacts with ZDHHC13 (via ANK repeats). Interacts with ZDHHC17 (via ANK repeats). Post-translationally, palmitoylation by ZDHHC17 regulates association with the plasma membrane.

The protein localises to the cell membrane. It is found in the cytoplasm. It localises to the golgi apparatus. The protein resides in the golgi stack. In terms of biological role, functions as a cytoplasmic linker protein. Involved in TGN-endosome dynamics. May modulate the cellular compartmentalization of AKT kinase family and promote its cell membrane localization, thereby playing a role in glucose transport in adipocytes. The polypeptide is CAP-Gly domain-containing linker protein 3 (Clip3) (Mus musculus (Mouse)).